The primary structure comprises 530 residues: Portal protein (530 aa).

This sequence belongs to the siphoviridae portal protein family. In terms of assembly, homododecamer. Interacts with the terminase complex composed of two small and one large terminase subunits. In terms of processing, proteolytically cleaved by the viral protease during capsid maturation.

It is found in the virion. Forms the portal vertex of the capsid. This portal plays critical roles in head assembly, genome packaging, neck/tail attachment, and genome ejection. The portal protein multimerizes as a single ring-shaped homododecamer arranged around a central channel. Binds to the terminase subunits to form the packaging machine. In Escherichia phage N15 (Bacteriophage N15), this protein is Portal protein.